The sequence spans 493 residues: Cytochrome c-552 (493 aa).

Positions 1-25 are cleaved as a signal peptide; it reads MEKKLKSWQGWLLSGGSMVVVFVLG. H116 contacts heme c. Heme is bound by residues C144, C147, and K148. 6 residues coordinate heme c: C182, C185, H186, C224, C227, and H228. The Ca(2+) site is built by E230, Y231, K276, and Q278. Substrate is bound at residue Y231. Residue H279 coordinates substrate. The heme c site is built by H290, C297, C300, H301, H315, C328, C331, H332, and H407.

The protein belongs to the cytochrome c-552 family. Ca(2+) is required as a cofactor. It depends on heme c as a cofactor.

The protein resides in the periplasm. The catalysed reaction is 6 Fe(III)-[cytochrome c] + NH4(+) + 2 H2O = 6 Fe(II)-[cytochrome c] + nitrite + 8 H(+). The protein operates within nitrogen metabolism; nitrate reduction (assimilation). Catalyzes the reduction of nitrite to ammonia, consuming six electrons in the process. In Bacteroides thetaiotaomicron (strain ATCC 29148 / DSM 2079 / JCM 5827 / CCUG 10774 / NCTC 10582 / VPI-5482 / E50), this protein is Cytochrome c-552.